We begin with the raw amino-acid sequence, 399 residues long: Elongation factor Tu (399 aa).

Residues Lys-10–Glu-204 enclose the tr-type G domain. The tract at residues Gly-19 to Thr-26 is G1. Gly-19 to Thr-26 contacts GTP. Thr-26 contributes to the Mg(2+) binding site. The interval Gly-60 to Asn-64 is G2. Residues Asp-81 to Gly-84 are G3. GTP contacts are provided by residues Asp-81–His-85 and Asn-136–Asp-139. Residues Asn-136 to Asp-139 form a G4 region. The tract at residues Ser-174–Leu-176 is G5.

This sequence belongs to the TRAFAC class translation factor GTPase superfamily. Classic translation factor GTPase family. EF-Tu/EF-1A subfamily. Monomer.

It is found in the cytoplasm. The catalysed reaction is GTP + H2O = GDP + phosphate + H(+). Its function is as follows. GTP hydrolase that promotes the GTP-dependent binding of aminoacyl-tRNA to the A-site of ribosomes during protein biosynthesis. The chain is Elongation factor Tu from Synechocystis sp. (strain ATCC 27184 / PCC 6803 / Kazusa).